The chain runs to 153 residues: Nucleoside diphosphate kinase (153 aa).

Residues lysine 13, phenylalanine 61, arginine 89, threonine 95, arginine 106, and asparagine 116 each coordinate ATP. Residue histidine 119 is the Pros-phosphohistidine intermediate of the active site.

This sequence belongs to the NDK family. The cofactor is Mg(2+). As to expression, highest levels in the liver and kidney with lower levels in the heart, brain and breast muscle.

It localises to the cytoplasm. It is found in the cell membrane. The enzyme catalyses a 2'-deoxyribonucleoside 5'-diphosphate + ATP = a 2'-deoxyribonucleoside 5'-triphosphate + ADP. The catalysed reaction is a ribonucleoside 5'-diphosphate + ATP = a ribonucleoside 5'-triphosphate + ADP. Its function is as follows. Major role in the synthesis of nucleoside triphosphates other than ATP. The ATP gamma phosphate is transferred to the NDP beta phosphate via a ping-pong mechanism, using a phosphorylated active-site intermediate. In Columba livia (Rock dove), this protein is Nucleoside diphosphate kinase.